We begin with the raw amino-acid sequence, 622 residues long: 4-hydroxyphenylalkanoate adenylyltransferase (622 aa).

Belongs to the ATP-dependent AMP-binding enzyme family.

It carries out the reaction 17-(4-hydroxyphenyl)heptadecanoate + holo-[(phenol)carboxyphthiodiolenone synthase] + ATP = 17-(4-hydroxyphenyl)heptadecanoyl-[(phenol)carboxyphthiodiolenone synthase] + AMP + diphosphate. The catalysed reaction is 19-(4-hydroxyphenyl)nonadecanoate + holo-[(phenol)carboxyphthiodiolenone synthase] + ATP = 19-(4-hydroxyphenyl)nonadecanoyl-[(phenol)carboxyphthiodiolenone synthase] + AMP + diphosphate. Its pathway is lipid metabolism; fatty acid biosynthesis. Its function is as follows. Catalyzes the activation of long-chain fatty acids as acyl-adenylates (acyl-AMP), which are then transferred to the multifunctional polyketide synthase PpsA for further chain extension. Involved in the biosynthesis of phenolphthiocerol, which is an important intermediate in the biosynthesis of phenolic glycolipid (PGL), also called mycosid B. The sequence is that of 4-hydroxyphenylalkanoate adenylyltransferase (fadD29) from Mycobacterium marinum (strain ATCC BAA-535 / M).